A 476-amino-acid polypeptide reads, in one-letter code: Nitrosuccinate lyase (476 aa).

Residues arginine 137, arginine 140, and arginine 201 each coordinate fumarate. Serine 302 serves as the catalytic Proton acceptor. Residues lysine 308 and asparagine 310 each coordinate fumarate. The active-site Proton donor is the arginine 341.

It belongs to the class-II fumarase/aspartase family. In terms of assembly, homotetramer.

The enzyme catalyses 2-nitrobutanedioate = fumarate + nitrite + H(+). It participates in antibiotic biosynthesis. Part of a gene cluster involved in the biosynthesis of cremeomycin, a light-sensitive o-diazoquinone with antibacterial and antiproliferative effects. Catalyzes the formation of nitrous acid from nitrosuccinic acid (2-nitrobutanedioate) by elimination of its nitro group. The chain is Nitrosuccinate lyase from Streptomyces cremeus.